The chain runs to 84 residues: Small ribosomal subunit protein uS17 (84 aa).

It belongs to the universal ribosomal protein uS17 family. Part of the 30S ribosomal subunit.

Its function is as follows. One of the primary rRNA binding proteins, it binds specifically to the 5'-end of 16S ribosomal RNA. This Borreliella burgdorferi (strain ATCC 35210 / DSM 4680 / CIP 102532 / B31) (Borrelia burgdorferi) protein is Small ribosomal subunit protein uS17.